The primary structure comprises 573 residues: Delta 8-(E)-sphingolipid desaturase (573 aa).

The Cytochrome b5 heme-binding domain occupies 2–77 (SRVLSRRDIA…FKIWKIGRID (76 aa)). Heme-binding residues include His-37 and His-60. A helical transmembrane segment spans residues 228-248 (LFGISFYLLSLKWFAISAICL). The Histidine box-1 motif lies at 260-264 (HDAGH). Residues 273–293 (VDNIIGMTVASWIGGLSLGWW) form a helical membrane-spanning segment. The short motif at 297-301 (HNVHH) is the Histidine box-2 element. The next 3 helical transmembrane spans lie at 353 to 372 (YLYY…LSWM), 393 to 413 (LAGL…KQMP), and 422 to 442 (VMIS…SHFA). A Histidine box-3 motif is present at residues 481–485 (QVIHH).

This sequence belongs to the fatty acid desaturase type 1 family.

The protein resides in the membrane. It carries out the reaction an N-acylsphing-4-enine + 2 Fe(II)-[cytochrome b5] + O2 + 2 H(+) = a (4E,8E)-4-sphinga-4,8-dienine ceramide + 2 Fe(III)-[cytochrome b5] + 2 H2O. It participates in lipid metabolism; sphingolipid metabolism. Delta(8)-fatty-acid desaturase which introduces a double bond at the 8-position in the long-chain base (LCB) of ceramides. Required for the formation of the di-unsaturated sphingoid base (E,E)-sphinga-4,8-dienine during glucosylceramide (GluCer) biosynthesis. The polypeptide is Delta 8-(E)-sphingolipid desaturase (Kluyveromyces lactis (strain ATCC 8585 / CBS 2359 / DSM 70799 / NBRC 1267 / NRRL Y-1140 / WM37) (Yeast)).